The primary structure comprises 469 residues: tRNA(Ile)-lysidine synthase (469 aa).

26 to 31 (SGGPDS) is an ATP binding site.

This sequence belongs to the tRNA(Ile)-lysidine synthase family.

It localises to the cytoplasm. The catalysed reaction is cytidine(34) in tRNA(Ile2) + L-lysine + ATP = lysidine(34) in tRNA(Ile2) + AMP + diphosphate + H(+). Its function is as follows. Ligates lysine onto the cytidine present at position 34 of the AUA codon-specific tRNA(Ile) that contains the anticodon CAU, in an ATP-dependent manner. Cytidine is converted to lysidine, thus changing the amino acid specificity of the tRNA from methionine to isoleucine. In Shouchella clausii (strain KSM-K16) (Alkalihalobacillus clausii), this protein is tRNA(Ile)-lysidine synthase.